The following is a 182-amino-acid chain: Adenine phosphoribosyltransferase (182 aa).

This sequence belongs to the purine/pyrimidine phosphoribosyltransferase family. As to quaternary structure, homodimer.

It localises to the cytoplasm. The catalysed reaction is AMP + diphosphate = 5-phospho-alpha-D-ribose 1-diphosphate + adenine. It functions in the pathway purine metabolism; AMP biosynthesis via salvage pathway; AMP from adenine: step 1/1. In terms of biological role, catalyzes a salvage reaction resulting in the formation of AMP, that is energically less costly than de novo synthesis. This chain is Adenine phosphoribosyltransferase, found in Stutzerimonas stutzeri (Pseudomonas stutzeri).